Here is a 267-residue protein sequence, read N- to C-terminus: Levodione reductase (267 aa).

17 to 42 provides a ligand contact to NAD(+); it reads LITGGGSGLGRATAVRLAAEGAKLSL. S152 provides a ligand contact to substrate. The active-site Proton acceptor is Y165.

Belongs to the short-chain dehydrogenases/reductases (SDR) family.

The enzyme catalyses (4R)-hydroxy-(6R)-2,2,6-trimethylcyclohexanone + NAD(+) = (6R)-2,2,6-trimethyl-1,4-cyclohexanedione + NADH + H(+). Strongly activated by monovalent cations, such as K(+), Na(+), and NH4(+). In terms of biological role, catalyzes the regio- and stereoselective reversible NAD-dependent reduction of (6R)-2,2,6-trimethyl-1,4-cyclohexanedione (levodione) to (4R,6R)-4-hydroxy-2,2,6-trimethylcyclohexanone (actinol). In Leifsonia aquatica (Corynebacterium aquaticum), this protein is Levodione reductase (lvr).